An 868-amino-acid polypeptide reads, in one-letter code: LPS-assembly protein LptD (868 aa).

Positions methionine 1–alanine 24 are cleaved as a signal peptide.

Belongs to the LptD family. As to quaternary structure, component of the lipopolysaccharide transport and assembly complex. Interacts with LptE and LptA.

The protein localises to the cell outer membrane. Its function is as follows. Together with LptE, is involved in the assembly of lipopolysaccharide (LPS) at the surface of the outer membrane. The sequence is that of LPS-assembly protein LptD from Francisella tularensis subsp. tularensis (strain FSC 198).